Here is a 65-residue protein sequence, read N- to C-terminus: Large ribosomal subunit protein bL35 (65 aa).

Composition is skewed to basic residues over residues 1–16 (MPKM…RFKK) and 31–45 (HRFH…RQLR). The segment at 1 to 47 (MPKMKTHRASAKRFKKTANGGLKSASAYTSHRFHGKTKKQRRQLRGT) is disordered.

Belongs to the bacterial ribosomal protein bL35 family.

This Leuconostoc citreum (strain KM20) protein is Large ribosomal subunit protein bL35.